Here is a 402-residue protein sequence, read N- to C-terminus: MKIAVAGSGYVGLSLGVLLSLQNEVTIVDILPSKVDKINNGLSPIQDEYIEYYLKSKQLSIKATLDSKAAYKEAELVIIATPTNYNSRINYFDTQHVETVIKEVLSVNSHATLIIKSTIPIGFITEMRQKFQTDRIIFSPEFLRESKALYDNLYPSRIIVSCEENDSPKVKADAEKFALLLKSAAKKNNVPVLIMGASEAEAVKLFANTYLALRVAYFNELDTYAESRKLNSHMVIQGISYDDRIGMHYNNPSFGYGGYCLPKDTKQLLANYNNIPQTLIEAIVSSNNVRKSYIAKQIINVLEEQESPVKVVGVYRLIMKSNSDNFRESAIKDVIDILKSKDIKIIIYEPMLNKLESEDQSVLVNDLENFKKQANIIVTNRYDNELQDVKNKVYSRDIFGRD.

Residues 2-19 (KIAVAGSGYVGLSLGVLL), Val-11, Asp-29, Lys-34, Thr-83, Thr-118, and Glu-145 contribute to the NAD(+) site. Substrate contacts are provided by residues 141–145 (EFLRE), Lys-204, Asn-208, 249–253 (YNNPS), and Gly-257. Tyr-259 contacts NAD(+). Residue Cys-260 is the Nucleophile of the active site. Position 263 (Lys-263) interacts with NAD(+). Lys-320 contributes to the substrate binding site. NAD(+) is bound at residue Arg-327.

This sequence belongs to the UDP-glucose/GDP-mannose dehydrogenase family.

The catalysed reaction is UDP-alpha-D-glucose + 2 NAD(+) + H2O = UDP-alpha-D-glucuronate + 2 NADH + 3 H(+). It participates in nucleotide-sugar biosynthesis; UDP-alpha-D-glucuronate biosynthesis; UDP-alpha-D-glucuronate from UDP-alpha-D-glucose: step 1/1. Functionally, catalyzes the formation of UDP-glucuronic acid which is required for capsular hyaluronic acid synthesis. This is UDP-glucose 6-dehydrogenase (hasB) from Streptococcus pyogenes serotype M3 (strain ATCC BAA-595 / MGAS315).